An 874-amino-acid polypeptide reads, in one-letter code: Adhesion G-protein coupled receptor D1 (874 aa).

A signal peptide spans 1 to 25 (MEKLLRLCCWYSWLLLFYYNFQVRG). Residues 26-567 (VYSRSQDHPG…LARGHQVALS (542 aa)) are Extracellular-facing. Positions 79-276 (KGVTLLYYGR…ASPVMPTDAY (198 aa)) constitute a Pentraxin (PTX) domain. Residues Asn90, Asn185, Asn282, Asn302, Asn319, Asn394, Asn476, Asn501, and Asn533 are each glycosylated (N-linked (GlcNAc...) asparagine). Residues 371 to 557 (QVTVEGSSAM…AILMQVVPLE (187 aa)) form the GAIN-B domain. 2 cysteine pairs are disulfide-bonded: Cys510–Cys539 and Cys527–Cys541. Residues 510–557 (CAFLDFSSGEGVWSNHGCALTRGNLTYSVCRCTHLTNFAILMQVVPLE) are GPS. A stachel region spans residues 546 to 554 (NFAILMQVV). Gln563 is a 17beta-hydroxy-5alpha-androstan-3-one binding site. Residues 568–590 (SISYVGCSLSVLCLVATLVTFAV) form a helical membrane-spanning segment. The Cytoplasmic portion of the chain corresponds to 591-601 (LSSVSTIRNQR). The helical transmembrane segment at 602–623 (YHIHANLSFAVLVAQVLLLISF) threads the bilayer. At 624 to 632 (RLEPGTTPC) the chain is on the extracellular side. A disulfide bond links Cys632 and Cys704. The chain crosses the membrane as a helical span at residues 633-655 (QVMAVLLHYFFLSAFAWMLVEGL). The Cytoplasmic segment spans residues 656–673 (HLYSMVIKVFGSEDSKHR). A helical transmembrane segment spans residues 674–695 (YYYGMGWGFPLLICIISLSFAM). The Extracellular segment spans residues 696–710 (DSYGTSNNCWLSLAS). Residues 711 to 732 (GAIWAFVAPALFVIVVNIGILI) traverse the membrane as a helical segment. The Cytoplasmic portion of the chain corresponds to 733–757 (AVTRVISQISADNYKIHGDPSAFKL). The helical transmembrane segment at 758–780 (TAKAVAVLLPILGTSWVFGVLAV) threads the bilayer. The Extracellular portion of the chain corresponds to 781-783 (NGC). The chain crosses the membrane as a helical span at residues 784 to 810 (AVVFQYMFATLNSLQGLFIFLFHCLLN). Asn795 is a 17beta-hydroxy-5alpha-androstan-3-one binding site. Residues 811 to 874 (SEVRAAFKHK…SAHRVDLSAV (64 aa)) lie on the Cytoplasmic side of the membrane. The disordered stretch occupies residues 854–874 (TKLSPWDKSSHSAHRVDLSAV). A compositionally biased stretch (basic and acidic residues) spans 861-874 (KSSHSAHRVDLSAV).

Belongs to the G-protein coupled receptor 2 family. Adhesion G-protein coupled receptor (ADGR) subfamily. As to quaternary structure, heterodimer of 2 chains generated by proteolytic processing; the large extracellular N-terminal fragment and the membrane-bound C-terminal fragment predominantly remain associated and non-covalently linked. Interacts with ESYT1; interaction takes place in absence of cytosolic calcium and inhibits the G protein-coupled receptor activity of ADGRD1. Post-translationally, autoproteolytically processed at the GPS region of the GAIN-B domain; this cleavage modulates receptor activity. Cleavage takes place early in the secretory pathway before N-glycosylation. Up-regulated in CD133(+) cell population of glioblastoma.

The protein resides in the cell membrane. Forms a heterodimer of 2 chains generated by proteolytic processing that remain associated through non-covalent interactions mediated by the GAIN-B domain. In the inactivated receptor, the Stachel sequence (also named stalk) is embedded in the GAIN-B domain, where it adopts a beta-strand conformation. On activation, the Stachel moves into the 7 transmembrane region and adopts a twisted hook-shaped configuration that forms contacts within the receptor, leading to coupling of a G-alpha protein, which activates signaling. The cleaved GAIN-B and N-terminal domains can then dissociate from the rest of the receptor. Interaction with ESYT1 in absence of cytosolic calcium inhibits the G protein-coupled receptor activity; interaction and inhibition is relieved when cytosolic calcium increases. Activated by AP503, a small molecule that activates ADGRD1 without activating androgen nuclear receptors: AP503 enhances muscle strength without eliciting androgenic adverse effects. Activated by the 8E3E8 antibody that targets the N-terminus. Its function is as follows. Adhesion G-protein coupled receptor (aGPCR) for androgen hormone 5alpha-dihydrotestosterone (5alpha-DHT), also named 17beta-hydroxy-5alpha-androstan-3-one, the most potent hormone among androgens. Also activated by methenolone drug. Ligand binding causes a conformation change that triggers signaling via guanine nucleotide-binding proteins (G proteins) and modulates the activity of downstream effectors, such as adenylate cyclase. ADGRD1 is coupled to G(s) G proteins and mediates activation of adenylate cyclase activity. Acts as a 5alpha-DHT receptor in muscle cells, thereby increasing intracellular cyclic AMP (cAMP) levels and enhancing muscle strength. This chain is Adhesion G-protein coupled receptor D1, found in Homo sapiens (Human).